A 606-amino-acid polypeptide reads, in one-letter code: Calmegin (606 aa).

The N-terminal stretch at 1–19 (MRFQGFWLCLGLLFISVNA) is a signal peptide. The Lumenal segment spans residues 20 to 466 (EFMDDSVEME…QLMSATEQRP (447 aa)). At Lys-124 the chain carries N6-acetyllysine. Cys-147 and Cys-181 are joined by a disulfide. Residues 255-308 (PPINPPKEIEDPTDEKPDDWDERAKIPDASAVKPEDWDESEPPQIVDSSAVKPD) form a disordered region. 8 tandem repeats follow at residues 263–276 (IEDP…DWDE), 280–293 (IPDA…DWDE), 299–312 (IVDS…GWLD), 318–331 (IPDP…DWNE), 335–348 (GEWE…PACR), 352–365 (GEWS…PKYK), 366–379 (GIWR…PNYQ), and 380–393 (GIWS…PDYF). The span at 265 to 275 (DPTDEKPDDWD) shows a compositional bias: acidic residues. The tract at residues 313–346 (NEPEFIPDPNAEKPFDWNEDMDGEWEAPHISNPA) is interaction with PPIB. Cys-347 and Cys-351 are joined by a disulfide. The helical transmembrane segment at 467 to 487 (WLWFIYLLTAALPIALIGSFC) threads the bilayer. The Cytoplasmic portion of the chain corresponds to 488–606 (WPRKVKKKYE…SVRKRRVRKE (119 aa)). The span at 518-544 (EVKEEKAALEKPVDLEEEKKQSDGEIV) shows a compositional bias: basic and acidic residues. The tract at residues 518-606 (EVKEEKAALE…SVRKRRVRKE (89 aa)) is disordered. Over residues 545–567 (EKEEEGEPEEKSEEEIEIIEGQE) the composition is skewed to acidic residues. Ser-556, Ser-572, Ser-575, Ser-577, Ser-587, Ser-590, and Ser-597 each carry phosphoserine. A compositionally biased stretch (basic and acidic residues) spans 568-579 (EGNKSNKSGSED). The segment covering 597–606 (SVRKRRVRKE) has biased composition (basic residues).

This sequence belongs to the calreticulin family. Interacts with PPIB and PDILT. Interacts with ADAM2.

The protein localises to the endoplasmic reticulum membrane. Its function is as follows. Functions during spermatogenesis as a chaperone for a range of client proteins that are important for sperm adhesion onto the egg zona pellucida and for subsequent penetration of the zona pellucida. Required for normal sperm migration from the uterus into the oviduct. Required for normal male fertility. Binds calcium ions. The protein is Calmegin (CLGN) of Bos taurus (Bovine).